The following is a 238-amino-acid chain: MPESQPSSTSEPRVSAHNNGCLPGDDIWTQWRNIFAILTGKMSDEGIEQFRVARDIRNEAADCKRCEDQRDYLLQWSPVIRYLSDNIRQLGGDLSSHNIYCRRCTNRKAGGFDPDFGILLCANEMKDQGHLEDTMAHEMVHAYDHLRFKVDWADNLRHAACTEVLKTSLSGECRWAREFFRRGQWRFTQQHQECVKRRAILSVRARPTCKDEAHAERVVNEVWDSCFRDTRPFDEIYR.

His137 is a binding site for a divalent metal cation. Glu138 is an active-site residue. His141 serves as a coordination point for a divalent metal cation.

It belongs to the peptidase M76 family.

The protein resides in the mitochondrion inner membrane. Has a dual role in the assembly of mitochondrial ATPase. Acts as a protease that removes N-terminal residues of mitochondrial ATPase CF(0) subunit 6 at the intermembrane space side. Also involved in the correct assembly of the membrane-embedded ATPase CF(0) particle, probably mediating association of subunit 6 with the subunit 9 ring. This is Mitochondrial inner membrane protease atp23 (atp23) from Aspergillus oryzae (strain ATCC 42149 / RIB 40) (Yellow koji mold).